A 296-amino-acid polypeptide reads, in one-letter code: Protease HtpX homolog (296 aa).

2 helical membrane passes run 14–34 (VVLL…VGYL) and 39–59 (YQFG…SMIF). Residue His143 participates in Zn(2+) binding. Glu144 is an active-site residue. His147 lines the Zn(2+) pocket. 2 helical membrane passes run 158–178 (IAVA…RMLF) and 195–215 (ILVL…ASLV). Glu224 is a binding site for Zn(2+).

Belongs to the peptidase M48B family. The cofactor is Zn(2+).

The protein resides in the cell membrane. The polypeptide is Protease HtpX homolog (Streptococcus agalactiae serotype Ia (strain ATCC 27591 / A909 / CDC SS700)).